A 512-amino-acid chain; its full sequence is Bifunctional NAD(P)H-hydrate repair enzyme Nnr (512 aa).

The segment at 1 to 220 (MPIVAYDPDK…GVPPRLVLPQ (220 aa)) is NAD(P)H-hydrate epimerase. One can recognise a YjeF N-terminal domain in the interval 11 to 218 (VREADRAAVR…PIGVPPRLVL (208 aa)). An NADPHX 1; for epimerase activity region spans residues 58-62 (NNGGD). The K(+) site is built by Asn-59 and Asp-127. Residues 131-137 (GTGSGGE) form an NADPHX 1; for epimerase activity region. Position 161 (Asp-161) interacts with (6S)-NADPHX. Thr-164 provides a ligand contact to K(+). The YjeF C-terminal domain occupies 228 to 509 (GYEDLSHMRL…HQAALVLGGL (282 aa)). An ADP-dependent (S)-NAD(P)H-hydrate dehydratase region spans residues 228-512 (GYEDLSHMRL…ALVLGGLGDV (285 aa)). Gly-335 lines the (6S)-NADPHX pocket. Residues 385-391 (HEGEAAC) are NADPHX 2; for dehydratase activity. Residues 421-425 (KGRNS) and 440-449 (HPNLSVPGSG) each bind ADP. Residue Asp-450 coordinates (6S)-NADPHX.

This sequence in the N-terminal section; belongs to the NnrE/AIBP family. The protein in the C-terminal section; belongs to the NnrD/CARKD family. K(+) is required as a cofactor.

The enzyme catalyses (6S)-NADHX + ADP = AMP + phosphate + NADH + H(+). The catalysed reaction is (6S)-NADPHX + ADP = AMP + phosphate + NADPH + H(+). It catalyses the reaction (6R)-NADHX = (6S)-NADHX. It carries out the reaction (6R)-NADPHX = (6S)-NADPHX. Bifunctional enzyme that catalyzes the epimerization of the S- and R-forms of NAD(P)HX and the dehydration of the S-form of NAD(P)HX at the expense of ADP, which is converted to AMP. This allows the repair of both epimers of NAD(P)HX, a damaged form of NAD(P)H that is a result of enzymatic or heat-dependent hydration. This chain is Bifunctional NAD(P)H-hydrate repair enzyme Nnr (nnr), found in Thermanaerovibrio acidaminovorans (strain ATCC 49978 / DSM 6589 / Su883) (Selenomonas acidaminovorans).